A 514-amino-acid chain; its full sequence is Steroid 17-alpha-hydroxylase/17,20 lyase (514 aa).

Residue Cys-445 participates in heme binding.

This sequence belongs to the cytochrome P450 family. Heme serves as cofactor.

The protein resides in the membrane. It carries out the reaction a C21-steroid + reduced [NADPH--hemoprotein reductase] + O2 = a 17alpha-hydroxy-C21-steroid + oxidized [NADPH--hemoprotein reductase] + H2O + H(+). The catalysed reaction is 17alpha-hydroxyprogesterone + reduced [NADPH--hemoprotein reductase] + O2 = androst-4-ene-3,17-dione + acetate + oxidized [NADPH--hemoprotein reductase] + H2O + 2 H(+). The enzyme catalyses 17alpha-hydroxypregnenolone + reduced [NADPH--hemoprotein reductase] + O2 = 3beta-hydroxyandrost-5-en-17-one + acetate + oxidized [NADPH--hemoprotein reductase] + H2O + 2 H(+). Its pathway is lipid metabolism; steroid biosynthesis. Conversion of pregnenolone and progesterone to their 17-alpha-hydroxylated products and subsequently to dehydroepiandrosterone (DHEA) and androstenedione. Catalyzes both the 17-alpha-hydroxylation and the 17,20-lyase reaction. This is Steroid 17-alpha-hydroxylase/17,20 lyase (cyp17a1) from Ictalurus punctatus (Channel catfish).